The primary structure comprises 231 residues: Large ribosomal subunit protein uL1 (231 aa).

The protein belongs to the universal ribosomal protein uL1 family. As to quaternary structure, part of the 50S ribosomal subunit.

Binds directly to 23S rRNA. The L1 stalk is quite mobile in the ribosome, and is involved in E site tRNA release. In terms of biological role, protein L1 is also a translational repressor protein, it controls the translation of the L11 operon by binding to its mRNA. The polypeptide is Large ribosomal subunit protein uL1 (Lactobacillus delbrueckii subsp. bulgaricus (strain ATCC 11842 / DSM 20081 / BCRC 10696 / JCM 1002 / NBRC 13953 / NCIMB 11778 / NCTC 12712 / WDCM 00102 / Lb 14)).